The following is a 395-amino-acid chain: Flap endonuclease 1 (395 aa).

The segment at 1 to 104 is N-domain; that stretch reads MGIKQLYQVI…GELAKRFARK (104 aa). Position 34 (Asp-34) interacts with Mg(2+). Arg-47 and Arg-70 together coordinate DNA. Positions 86, 158, 160, 179, and 181 each coordinate Mg(2+). Residues 122 to 253 form an I-domain region; that stretch reads DVEKFSRRTV…NTALKLIRDH (132 aa). Position 158 (Glu-158) interacts with DNA. DNA-binding residues include Gly-231 and Asp-233. Residue Asp-233 coordinates Mg(2+). The tract at residues 341-349 is interaction with PCNA; the sequence is QQSRLEGFF. The disordered stretch occupies residues 344–395; sequence RLEGFFKPVARTDEEKASLKRKHDEKIQEQKKKKKEEAKAKKEAKSRPRGAG. Residues 353-389 are compositionally biased toward basic and acidic residues; sequence ARTDEEKASLKRKHDEKIQEQKKKKKEEAKAKKEAKS.

This sequence belongs to the XPG/RAD2 endonuclease family. FEN1 subfamily. In terms of assembly, interacts with PCNA. Three molecules of fen1 bind to one PCNA trimer with each molecule binding to one PCNA monomer. PCNA stimulates the nuclease activity without altering cleavage specificity. Mg(2+) serves as cofactor. Phosphorylated. Phosphorylation upon DNA damage induces relocalization to the nuclear plasma.

The protein resides in the nucleus. The protein localises to the nucleolus. It is found in the nucleoplasm. It localises to the mitochondrion. Structure-specific nuclease with 5'-flap endonuclease and 5'-3' exonuclease activities involved in DNA replication and repair. During DNA replication, cleaves the 5'-overhanging flap structure that is generated by displacement synthesis when DNA polymerase encounters the 5'-end of a downstream Okazaki fragment. It enters the flap from the 5'-end and then tracks to cleave the flap base, leaving a nick for ligation. Also involved in the long patch base excision repair (LP-BER) pathway, by cleaving within the apurinic/apyrimidinic (AP) site-terminated flap. Acts as a genome stabilization factor that prevents flaps from equilibrating into structures that lead to duplications and deletions. Also possesses 5'-3' exonuclease activity on nicked or gapped double-stranded DNA, and exhibits RNase H activity. Also involved in replication and repair of rDNA and in repairing mitochondrial DNA. The sequence is that of Flap endonuclease 1 (fen1) from Aspergillus niger (strain ATCC MYA-4892 / CBS 513.88 / FGSC A1513).